Consider the following 263-residue polypeptide: Oxidoreductase tpcG (263 aa).

Belongs to the avfA family. In terms of tissue distribution, specifically expressed in conidia.

Its pathway is secondary metabolite biosynthesis. In terms of biological role, oxidoreductase; part of the gene cluster that mediates the biosynthesis of trypacidin, a mycotoxin with antiprotozoal activity and that plays a role in the infection process. The pathway begins with the synthesis of atrochrysone thioester by the polyketide synthase (PKS) tpcC. The atrochrysone carboxyl ACP thioesterase tpcB then breaks the thioester bond and releases the atrochrysone carboxylic acid from tpcC. The decarboxylase tpcK converts atrochrysone carboxylic acid to atrochrysone which is further reduced into emodin anthrone. The next step is performed by the emodin anthrone oxygenase tpcL that catalyzes the oxidation of emodinanthrone to emodin. Emodin O-methyltransferase encoded by tpcA catalyzes methylation of the 8-hydroxy group of emodin to form questin. Ring cleavage of questin by questin oxidase tpcI leads to desmethylsulochrin via several intermediates including questin epoxide. Another methylation step catalyzed by tpcM leads to the formation of sulochrin which is further converted to monomethylsulfochrin by tpcH. Finally, the tpcJ catalyzes the conversion of monomethylsulfochrin to trypacidin. Trypacidin is toxic for human pulmonary and bronchial epithelial cells by initiating the intracellular formation of nitric oxide (NO) and hydrogen peroxide (H(2)O(2)), thus triggering host necrotic cell death. The trypacidin pathway is also able to produce endocrocin via a distinct route from the endocrocin Enc pathway. This Aspergillus fumigatus (strain ATCC MYA-4609 / CBS 101355 / FGSC A1100 / Af293) (Neosartorya fumigata) protein is Oxidoreductase tpcG.